The primary structure comprises 210 residues: MVDFKMTKEGLILLIKDYQNLEEVLNAISARITQMGGFFAKGDRISLMIENHNKHSQDIPKIVSHLRNLGLEVSQILVGSTVEGKENDLRVQSRTTVESTGKVIKRNIRSGQTVVHSGDVIVFGNVNKGAEILAGGSVVVFGKAQGNIRAGLNEGEQAVVAALDLQTSLIQIAGFITHSKGEENVPSIAHVKGNRIVIEPFDKVSFERSE.

Belongs to the MinC family. Interacts with MinD and FtsZ.

Its function is as follows. Cell division inhibitor that blocks the formation of polar Z ring septums. Rapidly oscillates between the poles of the cell to destabilize FtsZ filaments that have formed before they mature into polar Z rings. Prevents FtsZ polymerization. The sequence is that of Probable septum site-determining protein MinC from Thermotoga sp. (strain RQ2).